A 249-amino-acid chain; its full sequence is Triosephosphate isomerase (249 aa).

11–13 (NWK) provides a ligand contact to substrate. The active-site Electrophile is the His91. The active-site Proton acceptor is the Glu163. Residues Gly169, Ser208, and 229 to 230 (GG) contribute to the substrate site.

The protein belongs to the triosephosphate isomerase family. As to quaternary structure, homodimer.

Its subcellular location is the cytoplasm. It carries out the reaction D-glyceraldehyde 3-phosphate = dihydroxyacetone phosphate. It participates in carbohydrate biosynthesis; gluconeogenesis. Its pathway is carbohydrate degradation; glycolysis; D-glyceraldehyde 3-phosphate from glycerone phosphate: step 1/1. Involved in the gluconeogenesis. Catalyzes stereospecifically the conversion of dihydroxyacetone phosphate (DHAP) to D-glyceraldehyde-3-phosphate (G3P). The protein is Triosephosphate isomerase of Pseudoalteromonas translucida (strain TAC 125).